The chain runs to 182 residues: NADH-quinone oxidoreductase subunit I (182 aa).

4Fe-4S ferredoxin-type domains follow at residues leucine 52 to alanine 82 and glutamate 92 to aspartate 121. Cysteine 62, cysteine 65, cysteine 68, cysteine 72, cysteine 101, cysteine 104, cysteine 107, and cysteine 111 together coordinate [4Fe-4S] cluster.

The protein belongs to the complex I 23 kDa subunit family. As to quaternary structure, NDH-1 is composed of 13 different subunits. Subunits NuoA, H, J, K, L, M, N constitute the membrane sector of the complex. [4Fe-4S] cluster is required as a cofactor.

It is found in the cell inner membrane. The catalysed reaction is a quinone + NADH + 5 H(+)(in) = a quinol + NAD(+) + 4 H(+)(out). In terms of biological role, NDH-1 shuttles electrons from NADH, via FMN and iron-sulfur (Fe-S) centers, to quinones in the respiratory chain. The immediate electron acceptor for the enzyme in this species is believed to be ubiquinone. Couples the redox reaction to proton translocation (for every two electrons transferred, four hydrogen ions are translocated across the cytoplasmic membrane), and thus conserves the redox energy in a proton gradient. This is NADH-quinone oxidoreductase subunit I from Pseudomonas entomophila (strain L48).